The sequence spans 38 residues: Potassium channel toxin alpha-KTx 2.3 (38 aa).

Cystine bridges form between C7/C29, C13/C34, and C17/C36.

It belongs to the short scorpion toxin superfamily. Potassium channel inhibitor family. Alpha-KTx 02 subfamily. In terms of tissue distribution, expressed by the venom gland.

The protein resides in the secreted. Functionally, inhibitor of voltage-gated potassium channels (Kv). It is capable of displacing the binding of radio-labeled noxiustoxin (AC P08815) to rat brain synaptosomes with high affinity (about 100 pM). It is also capable of inhibiting transient potassium-currents (resembling I(A)-type currents), in cultured rat cerebellar granule cells. About 50% of the peak currents are reduced by application of a 1.5 uM solution of this toxin. The polypeptide is Potassium channel toxin alpha-KTx 2.3 (Centruroides limpidus (Mexican scorpion)).